Here is a 170-residue protein sequence, read N- to C-terminus: Ribosome maturation factor RimM (170 aa).

The PRC barrel domain occupies 97 to 170; it reads KNEFYWTDLI…QIRVEWGSDW (74 aa).

Belongs to the RimM family. As to quaternary structure, binds ribosomal protein uS19.

It is found in the cytoplasm. Its function is as follows. An accessory protein needed during the final step in the assembly of 30S ribosomal subunit, possibly for assembly of the head region. Essential for efficient processing of 16S rRNA. May be needed both before and after RbfA during the maturation of 16S rRNA. It has affinity for free ribosomal 30S subunits but not for 70S ribosomes. The sequence is that of Ribosome maturation factor RimM from Dechloromonas aromatica (strain RCB).